The sequence spans 383 residues: Protein delta homolog 2 (383 aa).

The N-terminal stretch at 1–26 (MPSGCRCLHLVCLLCILGAPVKPARG) is a signal peptide. EGF-like domains lie at 27-58 (NDCSSLCDLAHGCCAPDGSCRCDPGWEGLHCE), 62-89 (RMPGCQHGTCHQPWQCICHTGWAGKFCD), 91-129 (DEHICTTQSPCRNGGQCVYDGGGDYHCVCPPGFHGRDCE), and 131-172 (KAGP…ARCE). Residues 27–306 (NDCSSLCDLA…RQEAGLGEPS (280 aa)) are Extracellular-facing. 17 disulfide bridges follow: C29–C40, C33–C46, C48–C57, C66–C71, C79–C88, C95–C107, C101–C117, C119–C128, C135–C148, C142–C160, C162–C171, C178–C189, C183–C198, C200–C209, C216–C227, C221–C236, and C238–C247. Residue N157 is glycosylated (N-linked (GlcNAc...) asparagine). The 37-residue stretch at 174–210 (NVDDCLMRPCANGATCLDGINRFSCLCPEGFTGRFCT) folds into the EGF-like 5; calcium-binding domain. The EGF-like 6; calcium-binding domain occupies 212 to 248 (NLDDCASRPCQRGARCRDRVHDFDCLCPSGYGGKTCE). Residues 307 to 327 (LVAVVVFGAVTAALVLSTVLL) form a helical membrane-spanning segment. At 328 to 383 (TLRAWRRGFCPPGPCCYPAPHYAPARQDQECQVSMLPTGLPLPPDLPPEPGKTTAL) the chain is on the cytoplasmic side. Positions 364–383 (PTGLPLPPDLPPEPGKTTAL) are disordered. The span at 367–377 (LPLPPDLPPEP) shows a compositional bias: pro residues.

The protein localises to the membrane. In terms of biological role, regulates adipogenesis. This chain is Protein delta homolog 2 (DLK2), found in Bos taurus (Bovine).